Consider the following 151-residue polypeptide: 3-dehydroquinate dehydratase (151 aa).

Tyr26 serves as the catalytic Proton acceptor. Substrate-binding residues include Asn75, His81, and Asp88. The active-site Proton donor is His101. Substrate contacts are provided by residues 102–103 and Arg112; that span reads LS.

The protein belongs to the type-II 3-dehydroquinase family. In terms of assembly, homododecamer.

It carries out the reaction 3-dehydroquinate = 3-dehydroshikimate + H2O. It functions in the pathway metabolic intermediate biosynthesis; chorismate biosynthesis; chorismate from D-erythrose 4-phosphate and phosphoenolpyruvate: step 3/7. Its function is as follows. Catalyzes a trans-dehydration via an enolate intermediate. The protein is 3-dehydroquinate dehydratase of Shewanella halifaxensis (strain HAW-EB4).